Reading from the N-terminus, the 161-residue chain is DNA-directed RNA polymerase 18 kDa subunit (161 aa).

It belongs to the poxviridae DNA-directed RNA polymerase 18 kDa subunit family. The DNA-dependent RNA polymerase used for intermediate and late genes expression consists of eight subunits Rpo30/OPG66, Rpo7/OPG90, Rpo22/OPG103, Rpo147/OPG105, Rpo18/OPG119, Rpo19/OPG131, Rpo132/OPG151 and Rpo35/OPG156. The same holoenzyme, with the addition of the transcription-specificity factor OPG109, is used for early gene expression. Apparently non-glycosylated.

It localises to the virion. The catalysed reaction is RNA(n) + a ribonucleoside 5'-triphosphate = RNA(n+1) + diphosphate. Functionally, part of the DNA-dependent RNA polymerase which catalyzes the transcription of viral DNA into RNA using the four ribonucleoside triphosphates as substrates. Responsible for the transcription of early, intermediate and late genes. DNA-dependent RNA polymerase associates with the early transcription factor (ETF), itself composed of OPG118 and OPG133, thereby allowing the early genes transcription. Late transcription, and probably also intermediate transcription, require newly synthesized RNA polymerase. In Cynomys gunnisoni (Gunnison's prairie dog), this protein is DNA-directed RNA polymerase 18 kDa subunit (OPG119).